Reading from the N-terminus, the 99-residue chain is Large ribosomal subunit protein uL23 (99 aa).

The protein belongs to the universal ribosomal protein uL23 family. As to quaternary structure, part of the 50S ribosomal subunit. Contacts protein L29, and trigger factor when it is bound to the ribosome.

Its function is as follows. One of the early assembly proteins it binds 23S rRNA. One of the proteins that surrounds the polypeptide exit tunnel on the outside of the ribosome. Forms the main docking site for trigger factor binding to the ribosome. The chain is Large ribosomal subunit protein uL23 from Lachnospira eligens (strain ATCC 27750 / DSM 3376 / VPI C15-48 / C15-B4) (Eubacterium eligens).